The following is a 258-amino-acid chain: Flagellin B3 (258 aa).

Positions 1-8 (MRFLKKRG) are excised as a propeptide.

This sequence belongs to the archaeal flagellin family.

The protein localises to the archaeal flagellum. In terms of biological role, flagellin is the subunit protein which polymerizes to form the filaments of archaeal flagella. The protein is Flagellin B3 (flaB3) of Thermococcus kodakarensis (strain ATCC BAA-918 / JCM 12380 / KOD1) (Pyrococcus kodakaraensis (strain KOD1)).